The following is a 6077-amino-acid chain: Nonribosomal peptide synthetase nlsA (6077 aa).

The tract at residues 417–618 (VFAYAPLIHG…LGRKDSQIKL (202 aa)) is adenylation 1. In terms of domain architecture, Carrier 1 spans 751–827 (HSEVTVEDRL…DLVTRVQEIK (77 aa)). At Ser-788 the chain carries O-(pantetheine 4'-phosphoryl)serine. 2 condensation regions span residues 842 to 1267 (LSPI…GKRL) and 1309 to 1737 (EDIY…KQRI). Adenylation regions lie at residues 1757–2149 (QEKM…YLGE) and 2755–3157 (DRVI…QVKL). Positions 3297–3373 (AVERAAESTL…DMAKCCDDTE (77 aa)) constitute a Carrier 2 domain. Ser-3334 carries the post-translational modification O-(pantetheine 4'-phosphoryl)serine. Residues 3524–3779 (DSRYRQCLYK…LLSVPRDSLM (256 aa)) form a condensation 3 region. Residues 3816–4213 (ENAIMHPQAT…LGRKDHQVKL (398 aa)) are adenylation 4. Positions 4361 to 4437 (REGDATPAII…ELAVSCGTKP (77 aa)) constitute a Carrier 3 domain. Residue Ser-4398 is modified to O-(pantetheine 4'-phosphoryl)serine. Condensation stretches follow at residues 4451–4869 (PLSP…RVLE) and 4916–5260 (VEDI…EDKT). In terms of domain architecture, Carrier 4 spans 5334 to 5410 (RAPNDSEKQL…NMMALINDRK (77 aa)). An O-(pantetheine 4'-phosphoryl)serine modification is found at Ser-5371. The condensation 6 stretch occupies residues 5476 to 5885 (DVLPVTDFQA…SLVANPNVAL (410 aa)). The region spanning 5921–6004 (SEILVHSDLI…GHMAVLALNM (84 aa)) is the Carrier 5 domain. Residues 6013 to 6027 (DSDAAPAPAYAPVDA) are compositionally biased toward low complexity. The tract at residues 6013–6047 (DSDAAPAPAYAPVDARASRNVSTSRQQQEGLPLPA) is disordered. Residues 6031–6041 (RNVSTSRQQQE) are compositionally biased toward polar residues.

The protein belongs to the NRP synthetase family.

It participates in secondary metabolite biosynthesis. Nonribosomal peptide synthetase involved in the synthesis of nidulanin A and derived compounds. Nidulanin A is a tetracyclopeptide with the sequence L-Phe-L-Kyn-L-Val-D-Val and an isoprene unit N-linked to the amino group of L-kynurenine. The NRPS nlsA is responsible of the synthesis of the cyclopeptide and the prenyltransferase nptA adds the isoprene unit on the L-kynurenine residue of nidulanin A. Further modifications lead to additional oxygenated related compounds. The protein is Nonribosomal peptide synthetase nlsA of Emericella nidulans (strain FGSC A4 / ATCC 38163 / CBS 112.46 / NRRL 194 / M139) (Aspergillus nidulans).